The primary structure comprises 303 residues: Acetaldehyde dehydrogenase (303 aa).

An NAD(+)-binding site is contributed by 13–16; the sequence is SGNI. Cys128 acts as the Acyl-thioester intermediate in catalysis. NAD(+)-binding positions include 159 to 167 and Asn278; that span reads SAGPGTRQN.

This sequence belongs to the acetaldehyde dehydrogenase family.

It catalyses the reaction acetaldehyde + NAD(+) + CoA = acetyl-CoA + NADH + H(+). This is Acetaldehyde dehydrogenase from Chloroflexus aggregans (strain MD-66 / DSM 9485).